A 128-amino-acid polypeptide reads, in one-letter code: Fluoride-specific ion channel FluC (128 aa).

Helical transmembrane passes span 5 to 25, 35 to 55, 67 to 87, and 96 to 116; these read IVAI…LALA, LGTL…AVVF, LFVI…SVEV, and FGWA…LTAL. Residues Gly-75 and Thr-78 each coordinate Na(+).

This sequence belongs to the fluoride channel Fluc/FEX (TC 1.A.43) family.

The protein resides in the cell inner membrane. The enzyme catalyses fluoride(in) = fluoride(out). With respect to regulation, na(+) is not transported, but it plays an essential structural role and its presence is essential for fluoride channel function. Its function is as follows. Fluoride-specific ion channel. Important for reducing fluoride concentration in the cell, thus reducing its toxicity. The polypeptide is Fluoride-specific ion channel FluC (Burkholderia ambifaria (strain MC40-6)).